We begin with the raw amino-acid sequence, 78 residues long: Beta sliding clamp (78 aa).

This sequence belongs to the beta sliding clamp family. As to quaternary structure, forms a ring-shaped head-to-tail homodimer around DNA which binds and tethers DNA polymerases and other proteins to the DNA. The DNA replisome complex has a single clamp-loading complex (3 tau and 1 each of delta, delta', psi and chi subunits) which binds 3 Pol III cores (1 core on the leading strand and 2 on the lagging strand) each with a beta sliding clamp dimer. Additional proteins in the replisome are other copies of gamma, psi and chi, Ssb, DNA helicase and RNA primase.

Its subcellular location is the cytoplasm. Functionally, confers DNA tethering and processivity to DNA polymerases and other proteins. Acts as a clamp, forming a ring around DNA (a reaction catalyzed by the clamp-loading complex) which diffuses in an ATP-independent manner freely and bidirectionally along dsDNA. Initially characterized for its ability to contact the catalytic subunit of DNA polymerase III (Pol III), a complex, multichain enzyme responsible for most of the replicative synthesis in bacteria; Pol III exhibits 3'-5' exonuclease proofreading activity. The beta chain is required for initiation of replication as well as for processivity of DNA replication. In Serratia marcescens, this protein is Beta sliding clamp (dnaN).